A 293-amino-acid polypeptide reads, in one-letter code: ELMO domain-containing protein 2 (293 aa).

The ELMO domain occupies 126–282; sequence QHEKMLLKLW…KFHERIKGLL (157 aa).

Functionally, acts as a GTPase-activating protein (GAP) toward guanine nucleotide exchange factors like ARL2, ARL3, ARF1 and ARF6, but not for GTPases outside the Arf family. The protein is ELMO domain-containing protein 2 (Elmod2) of Mus musculus (Mouse).